Consider the following 346-residue polypeptide: NADP-dependent alcohol dehydrogenase C (346 aa).

Positions 41, 63, 94, 97, 100, 108, and 158 each coordinate Zn(2+).

The protein belongs to the zinc-containing alcohol dehydrogenase family. Requires Zn(2+) as cofactor.

It carries out the reaction a primary alcohol + NADP(+) = an aldehyde + NADPH + H(+). This Mycobacterium bovis (strain ATCC BAA-935 / AF2122/97) protein is NADP-dependent alcohol dehydrogenase C (adhC).